Reading from the N-terminus, the 268-residue chain is Small ribosomal subunit protein eS1 (268 aa).

Positions 1-21 (MAVGKNKGLSKGGKKGGKKKV) are disordered.

This sequence belongs to the eukaryotic ribosomal protein eS1 family. Component of the small ribosomal subunit. Mature ribosomes consist of a small (40S) and a large (60S) subunit. The 40S subunit contains about 33 different proteins and 1 molecule of RNA (18S). The 60S subunit contains about 49 different proteins and 3 molecules of RNA (28S, 5.8S and 5S).

Its subcellular location is the cytoplasm. In terms of biological role, essential for oogenesis; required for late follicle cell development. In Drosophila willistoni (Fruit fly), this protein is Small ribosomal subunit protein eS1.